The following is a 23-amino-acid chain: Basic phospholipase A2 CTs-G6 (23 aa).

Requires Ca(2+) as cofactor. Post-translationally, contains 7 disulfide bonds. Expressed by the venom gland.

It localises to the secreted. The enzyme catalyses a 1,2-diacyl-sn-glycero-3-phosphocholine + H2O = a 1-acyl-sn-glycero-3-phosphocholine + a fatty acid + H(+). Its function is as follows. Snake venom phospholipase A2 (PLA2) that induces local edema a few hours after injection (5-10 ug) in the hind paw. PLA2 catalyzes the calcium-dependent hydrolysis of the 2-acyl groups in 3-sn-phosphoglycerides. This Trimeresurus stejnegeri (Chinese green tree viper) protein is Basic phospholipase A2 CTs-G6.